Here is a 336-residue protein sequence, read N- to C-terminus: Atypical chemokine receptor 1 (336 aa).

Positions 1-30 are mediates Plasmodium vivax Duffy receptor (PVDR) binding; the sequence is MGNCLHRAELSPSTENSSQLDFEDVWNSSY. Residues 1-63 are Extracellular-facing; it reads MGNCLHRAEL…CNLLDDSALP (63 aa). N-linked (GlcNAc...) asparagine glycosylation is present at Asn-16. Sulfotyrosine is present on Tyr-30. The N-linked (GlcNAc...) asparagine glycan is linked to Asn-33. Tyr-41 carries the sulfotyrosine modification. 2 cysteine pairs are disulfide-bonded: Cys-51–Cys-276 and Cys-129–Cys-195. A helical membrane pass occupies residues 64–84; the sequence is FFILTSVLGILASSTVLFMLF. Residues 85–95 are Cytoplasmic-facing; it reads RPLFRWQLCPG. The helical transmembrane segment at 96-116 threads the bilayer; the sequence is WPVLAQLAVGSALFSIVVPVL. Residues 117-129 are Extracellular-facing; sequence APGLGSTRSSALC. The chain crosses the membrane as a helical span at residues 130–153; the sequence is SLGYCVWYGSAFAQALLLGCHASL. The Cytoplasmic portion of the chain corresponds to 154-166; that stretch reads GHRLGAGQVPGLT. A helical transmembrane segment spans residues 167 to 187; sequence LGLTVGIWGVAALLTLPVTLA. Residues 188-207 lie on the Extracellular side of the membrane; the sequence is SGASGGLCTLIYSTELKALQ. The chain crosses the membrane as a helical span at residues 208 to 228; the sequence is ATHTVACLAIFVLLPLGLFGA. Over 229–244 the chain is Cytoplasmic; sequence KGLKKALGMGPGPWMN. The chain crosses the membrane as a helical span at residues 245–265; the sequence is ILWAWFIFWWPHGVVLGLDFL. Residues 266 to 287 lie on the Extracellular side of the membrane; it reads VRSKLLLLSTCLAQQALDLLLN. The chain crosses the membrane as a helical span at residues 288-308; it reads LAEALAILHCVATPLLLALFC. The Cytoplasmic segment spans residues 309–336; sequence HQATRTLLPSLPLPEGWSSHLDTLGSKS.

The protein belongs to the G-protein coupled receptor 1 family. Atypical chemokine receptor subfamily. (Microbial infection) Interacts (via N-terminal extracellular domain) with Plasmodium vivax Duffy receptor (PVDR) (via PvRII region). As to quaternary structure, (Microbial infection) Interacts (via N-terminal extracellular domain) with Plasmodium knowlesi Duffy receptor alpha form (DBPalpha) (via region II). Sulfation at Tyr-41 facilitates interaction with MGSA/CXCL1, RANTES/CCL5 and MCP-1/CCL2 but not IL8/CXCL8. Sulfation at Tyr-30 facilitates interaction with IL8/CXCL8. In terms of processing, (Microbial infection) Sulfation at Tyr-41 facilitates interaction with Plasmodium vivax Duffy receptor (PVDR). Sulfation at Tyr-30/Tyr-41 and Tyr-41 alone increases binding affinity of Plasmodium vivax parasites and likely promotes invasion of red blood cells. Post-translationally, (Microbial infection) Sulfation at Tyr-41 facilitates interaction with Plasmodium knowlesi Duffy receptor alpha form (DBPalpha). Sulfation at Tyr-30/Tyr-41 and Tyr-41 alone increases binding affinity of Plasmodium knowlesi parasites and likely promotes invasion of red blood cells. As to expression, found in adult kidney, adult spleen, bone marrow and fetal liver. In particular, it is expressed along postcapillary venules throughout the body, except in the adult liver. Erythroid cells and postcapillary venule endothelium are the principle tissues expressing duffy. Fy(-A-B) individuals do not express duffy in the bone marrow, however they do, in postcapillary venule endothelium.

Its subcellular location is the early endosome. The protein localises to the recycling endosome. The protein resides in the membrane. Functionally, atypical chemokine receptor that controls chemokine levels and localization via high-affinity chemokine binding that is uncoupled from classic ligand-driven signal transduction cascades, resulting instead in chemokine sequestration, degradation, or transcytosis. Also known as interceptor (internalizing receptor) or chemokine-scavenging receptor or chemokine decoy receptor. Has a promiscuous chemokine-binding profile, interacting with inflammatory chemokines of both the CXC and the CC subfamilies but not with homeostatic chemokines. Acts as a receptor for chemokines including CCL2, CCL5, CCL7, CCL11, CCL13, CCL14, CCL17, CXCL5, CXCL6, IL8/CXCL8, CXCL11, GRO, RANTES, MCP-1 and TARC. May regulate chemokine bioavailability and, consequently, leukocyte recruitment through two distinct mechanisms: when expressed in endothelial cells, it sustains the abluminal to luminal transcytosis of tissue-derived chemokines and their subsequent presentation to circulating leukocytes; when expressed in erythrocytes, serves as blood reservoir of cognate chemokines but also as a chemokine sink, buffering potential surges in plasma chemokine levels. Its function is as follows. (Microbial infection) Acts as a receptor for the malaria parasite Plasmodium vivax. In terms of biological role, (Microbial infection) Acts as a receptor for the malaria parasite Plasmodium knowlesi. This Homo sapiens (Human) protein is Atypical chemokine receptor 1 (ACKR1).